Reading from the N-terminus, the 508-residue chain is Metalloprotease TIKI1 (508 aa).

The signal sequence occupies residues 1–23 (MVIIWNIFLPAFLLVLAKASLRS). Over 24-485 (SRDSANCKLN…KYIKAAQSVS (462 aa)) the chain is Extracellular. 4 N-linked (GlcNAc...) asparagine glycosylation sites follow: N219, N228, N277, and N335. The helical transmembrane segment at 486–506 (FSLSIPSAFLLLAWCFQQVAV) threads the bilayer. Over 507 to 508 (LQ) the chain is Cytoplasmic.

The protein belongs to the TIKI family. It depends on Mn(2+) as a cofactor. The cofactor is Co(2+). In terms of tissue distribution, zygotically expressed in the Spemann-Mangold organizer, in particular in the head Spemann-Mangold organizer region responsible for anterior patterning.

It localises to the cell membrane. Functionally, metalloprotease that acts as a negative regulator of the Wnt signaling pathway: expressed in the Spemann-Mangold organizer and is required for anterior-neural patterning in head formation in embryos. Acts by mediating the cleavage of the N-terminal residues of a subset of Wnt proteins. Following cleavage, Wnt proteins become oxidized and form large disulfide-bond oligomers, leading to their inactivation. Able to cleave wnt8. In Xenopus tropicalis (Western clawed frog), this protein is Metalloprotease TIKI1 (trabd2a).